Here is a 501-residue protein sequence, read N- to C-terminus: Bifunctional purine biosynthesis protein PurH (501 aa).

One can recognise an MGS-like domain in the interval 1–144; that stretch reads MKKRALISVF…KNFKDVVVLS (144 aa).

The protein belongs to the PurH family.

It catalyses the reaction (6R)-10-formyltetrahydrofolate + 5-amino-1-(5-phospho-beta-D-ribosyl)imidazole-4-carboxamide = 5-formamido-1-(5-phospho-D-ribosyl)imidazole-4-carboxamide + (6S)-5,6,7,8-tetrahydrofolate. The catalysed reaction is IMP + H2O = 5-formamido-1-(5-phospho-D-ribosyl)imidazole-4-carboxamide. It functions in the pathway purine metabolism; IMP biosynthesis via de novo pathway; 5-formamido-1-(5-phospho-D-ribosyl)imidazole-4-carboxamide from 5-amino-1-(5-phospho-D-ribosyl)imidazole-4-carboxamide (10-formyl THF route): step 1/1. It participates in purine metabolism; IMP biosynthesis via de novo pathway; IMP from 5-formamido-1-(5-phospho-D-ribosyl)imidazole-4-carboxamide: step 1/1. This chain is Bifunctional purine biosynthesis protein PurH, found in Clostridium perfringens (strain 13 / Type A).